The sequence spans 270 residues: MKTIVLKLGGEIVHSPELDLVARDLRTLVDGWNRVAIVHGGGPQATALQKRLGLETRMVAGRRYTDEATLEVMKYVVAGQLNVDLCARLLANGVMPVGLHGASGHAVQATRRPPRVMQGAGPEPVDLGLVGDVVGFNLPLLGDLFERRYVPVLACLGCDDAGQALNINGDTVASQLAGALRADALVLVTSTPGVLRDVKDPSSRIPRITRAEFERLVADGTISGGMIPKLEESFEVLRGGARSVVILGKLSPGDLVAAVLEPGSAGTVLE.

Residues 41 to 42 (GG), R63, and N166 contribute to the substrate site.

This sequence belongs to the acetylglutamate kinase family. ArgB subfamily.

Its subcellular location is the cytoplasm. The catalysed reaction is N-acetyl-L-glutamate + ATP = N-acetyl-L-glutamyl 5-phosphate + ADP. It participates in amino-acid biosynthesis; L-arginine biosynthesis; N(2)-acetyl-L-ornithine from L-glutamate: step 2/4. Functionally, catalyzes the ATP-dependent phosphorylation of N-acetyl-L-glutamate. The chain is Acetylglutamate kinase from Anaeromyxobacter dehalogenans (strain 2CP-C).